A 481-amino-acid polypeptide reads, in one-letter code: MAEKITLRETDYSQWYIDLVRSAKLADYSDVRGCMIIRPNGYAIWEKMQAALDAMFKATGHVNAYFPLFIPESFIKKEAEHIEGFAPECAVVTHGGGEQLAENLYVRPTSETIIWSSYKKWIQSYRDLPILINQWANVVRWEMRTRLFLRTTEFLWQEGHTAHATSTEAQEEVMRMINVYKTFAEEYMALPVIMGRKTESEKFAGAVETWCIEAMMQDKKALQAGTSHNLGQNFAKAFDCRFQSKEGALEYVWATSWGVSTRLIGALIMAHSDDRGLVLPPKLATRQVVIIPILKGDISAVIEKARSIAAELNQKGIAAFVDDSDQNSPGWKFAEYELQGIPVRLELGPRDIQSSTCIAARRDTGEKSKLQLDSSLADQINSLLESIQTNLFNRALSFREKHTLEVSSYSEFKANIDNGFLVAHWDGTDETEAKIKEETKATIRVMPADPEMVLRYGMDQPGTCIYSGKPSTRKVIFAKAY.

It belongs to the class-II aminoacyl-tRNA synthetase family. ProS type 3 subfamily. As to quaternary structure, homodimer.

The protein resides in the cytoplasm. It catalyses the reaction tRNA(Pro) + L-proline + ATP = L-prolyl-tRNA(Pro) + AMP + diphosphate. Catalyzes the attachment of proline to tRNA(Pro) in a two-step reaction: proline is first activated by ATP to form Pro-AMP and then transferred to the acceptor end of tRNA(Pro). The chain is Proline--tRNA ligase from Prosthecochloris aestuarii (strain DSM 271 / SK 413).